Here is a 361-residue protein sequence, read N- to C-terminus: Endo-1,4-beta-xylanase 2 (361 aa).

The first 26 residues, Met1 to Ser26, serve as a signal peptide directing secretion. Positions Ile46–Thr354 constitute a GH10 domain. Asn88 and Asn130 each carry an N-linked (GlcNAc...) asparagine glycan. Glu160 serves as the catalytic Proton donor. The active-site Nucleophile is the Glu276. An intrachain disulfide couples Cys304 to Cys310.

This sequence belongs to the glycosyl hydrolase 10 (cellulase F) family.

It is found in the secreted. It catalyses the reaction Endohydrolysis of (1-&gt;4)-beta-D-xylosidic linkages in xylans.. Its pathway is glycan degradation; xylan degradation. In terms of biological role, endo-1,4-beta-xylanase involved in the hydrolysis of xylan, a major structural heterogeneous polysaccharide found in plant biomass representing the second most abundant polysaccharide in the biosphere, after cellulose. Hydrolyzes birch-wood xylan, with a similar activity toward oat-spelt xylan. Also shows weak activities toward pNP-beta-D-cellobioside and pNP-beta-D-xylopyranoside, but no detectable activity toward carboxymethyl cellulose and pNP-beta-L-arabinofuranoside.-. The sequence is that of Endo-1,4-beta-xylanase 2 (xynII) from Aureobasidium pullulans (Black yeast).